Here is a 380-residue protein sequence, read N- to C-terminus: Glucose ABC transporter permease protein TsgB13 (380 aa).

The next 10 helical transmembrane spans lie at 20–40 (GTPVLTVLAALAVGGVALVAL), 59–81 (QFGLTEVLVRAVPLILAGLAVYL), 94–114 (GQLLLGALAGTWVAVNVSLPA), 115–135 (VALLPLMFLAACVAGAFWAGI), 148–166 (IITSLLLTFVAQELQSYLL), 202–222 (IPLFADVHAGLLVAVAAVVAT), 255–275 (VYLFVFLLGGAFAALGGIAEI), 282–301 (FRAAFAPGYGFTAIPIALLG), 305–325 (AVKVTLAGLFFAVLFVGGSSV), and 328–348 (AFGVPAALVEIIQALVILFLI).

This sequence belongs to the binding-protein-dependent transport system permease family. As to quaternary structure, the complex is composed of two ATP-binding proteins (TsgD13), two transmembrane proteins (TsgB13 and TsgC13) and a solute-binding protein (TsgA13).

The protein localises to the cell membrane. In terms of biological role, part of an ABC transporter complex involved in glucose import. Responsible for the translocation of the substrate across the membrane. This Haloferax volcanii (strain ATCC 29605 / DSM 3757 / JCM 8879 / NBRC 14742 / NCIMB 2012 / VKM B-1768 / DS2) (Halobacterium volcanii) protein is Glucose ABC transporter permease protein TsgB13 (tsgB13).